A 144-amino-acid chain; its full sequence is Large ribosomal subunit protein uL16 (144 aa).

Belongs to the universal ribosomal protein uL16 family. As to quaternary structure, part of the 50S ribosomal subunit.

Binds 23S rRNA and is also seen to make contacts with the A and possibly P site tRNAs. In Levilactobacillus brevis (strain ATCC 367 / BCRC 12310 / CIP 105137 / JCM 1170 / LMG 11437 / NCIMB 947 / NCTC 947) (Lactobacillus brevis), this protein is Large ribosomal subunit protein uL16.